The sequence spans 157 residues: Deoxyuridine 5'-triphosphate nucleotidohydrolase (157 aa).

Residues 73–75, Asn-86, and 90–92 each bind substrate; these read RSG and TID.

The protein belongs to the dUTPase family. Requires Mg(2+) as cofactor.

It catalyses the reaction dUTP + H2O = dUMP + diphosphate + H(+). It functions in the pathway pyrimidine metabolism; dUMP biosynthesis; dUMP from dCTP (dUTP route): step 2/2. In terms of biological role, this enzyme is involved in nucleotide metabolism: it produces dUMP, the immediate precursor of thymidine nucleotides and it decreases the intracellular concentration of dUTP so that uracil cannot be incorporated into DNA. This is Deoxyuridine 5'-triphosphate nucleotidohydrolase from Azorhizobium caulinodans (strain ATCC 43989 / DSM 5975 / JCM 20966 / LMG 6465 / NBRC 14845 / NCIMB 13405 / ORS 571).